The chain runs to 551 residues: Sialic acid-binding Ig-like lectin 5 (551 aa).

A signal peptide spans 1 to 16; it reads MLPLLLLPLLWGGSLQ. Residues 17-441 are Extracellular-facing; it reads EKPVYELQVQ…LGTGVVPAAL (425 aa). The 118-residue stretch at 19-136 folds into the Ig-like V-type domain; that stretch reads PVYELQVQKS…KYSYQQNKLN (118 aa). 3 disulfide bridges follow: Cys-36–Cys-170, Cys-41–Cys-101, and Cys-164–Cys-213. N-linked (GlcNAc...) asparagine glycosylation occurs at Asn-100. N-acetylneuraminate is bound by residues Arg-119, Lys-127, and Ser-129. Residues 146–229 form the Ig-like C2-type 1 domain; it reads PDIHFLEPLE…AQVTTERTVQ (84 aa). The disordered stretch occupies residues 189-210; it reads DPETTRSSELTLTPRPEDHGTN. Residues Asn-210, Asn-231, and Asn-253 are each glycosylated (N-linked (GlcNAc...) asparagine). The Ig-like C2-type 2 domain occupies 236 to 330; the sequence is PQTITIFRNG…GFLQIFLNLS (95 aa). Cys-269 and Cys-314 form a disulfide bridge. Asn-328, Asn-375, Asn-384, and Asn-393 each carry an N-linked (GlcNAc...) asparagine glycan. Residues 442 to 462 form a helical membrane-spanning segment; that stretch reads GGAGVMALLCICLCLIFFLIV. At 463-551 the chain is on the cytoplasmic side; it reads KARRKQAAGR…TEYSEIKTSK (89 aa). The segment at 469–551 is disordered; it reads AAGRPEKMDD…TEYSEIKTSK (83 aa). An ITIM motif motif is present at residues 518–523; that stretch reads LHYASL. Residues 528 to 537 show a composition bias toward basic and acidic residues; the sequence is MKSREPKDQE. The short motif at 542–547 is the SLAM-like motif element; the sequence is TEYSEI.

This sequence belongs to the immunoglobulin superfamily. SIGLEC (sialic acid binding Ig-like lectin) family. As to expression, expressed by monocytic/myeloid lineage cells. Found at high levels in peripheral blood leukocytes, spleen, bone marrow and at lower levels in lymph node, lung, appendix, placenta, pancreas and thymus. Expressed by monocytes and neutrophils but absent from leukemic cell lines representing early stages of myelomonocytic differentiation.

It localises to the membrane. Functionally, putative adhesion molecule that mediates sialic-acid dependent binding to cells. Binds equally to alpha-2,3-linked and alpha-2,6-linked sialic acid. The sialic acid recognition site may be masked by cis interactions with sialic acids on the same cell surface. The protein is Sialic acid-binding Ig-like lectin 5 (SIGLEC5) of Homo sapiens (Human).